Consider the following 497-residue polypeptide: Acetyl-coenzyme A carboxylase carboxyl transferase subunit beta, chloroplastic (497 aa).

The region spanning 230–497 (LWVQCENCYG…FFPLNQNSIK (268 aa)) is the CoA carboxyltransferase N-terminal domain. Zn(2+)-binding residues include Cys234, Cys237, Cys253, and Cys256. The C4-type zinc finger occupies 234-256 (CENCYGLNYKKFLKSKMNICEQC).

This sequence belongs to the AccD/PCCB family. Acetyl-CoA carboxylase is a heterohexamer composed of biotin carboxyl carrier protein, biotin carboxylase and 2 subunits each of ACCase subunit alpha and ACCase plastid-coded subunit beta (accD). Zn(2+) is required as a cofactor.

It is found in the plastid. The protein resides in the chloroplast stroma. It carries out the reaction N(6)-carboxybiotinyl-L-lysyl-[protein] + acetyl-CoA = N(6)-biotinyl-L-lysyl-[protein] + malonyl-CoA. Its pathway is lipid metabolism; malonyl-CoA biosynthesis; malonyl-CoA from acetyl-CoA: step 1/1. Component of the acetyl coenzyme A carboxylase (ACC) complex. Biotin carboxylase (BC) catalyzes the carboxylation of biotin on its carrier protein (BCCP) and then the CO(2) group is transferred by the transcarboxylase to acetyl-CoA to form malonyl-CoA. This is Acetyl-coenzyme A carboxylase carboxyl transferase subunit beta, chloroplastic from Carica papaya (Papaya).